Consider the following 282-residue polypeptide: Pseudokinase OPG198 (282 aa).

ATP contacts are provided by methionine 1 and lysine 30. Residues 1 to 282 (MESFKYCFDN…DRLRRLFIQD (282 aa)) enclose the Protein kinase domain.

It belongs to the protein kinase superfamily. Ser/Thr protein kinase family. Poxviruses subfamily. In terms of assembly, interacts with B1/VPK1. Interacts with host VRK1. Interacts with host VRK2.

It localises to the host nucleus. Its activity is regulated as follows. Both catalytically active kinases B1/VPK1 and host VRK2 repress B12 inhibitory activity in a B1/VPK1 deletion mutant strain. Pseudokinase that plays a role in viral DNA replication repression by activating the antiviral protein BANF1 and inhibiting the activity of host VRK1, a cellular modulator of BANF1. This chain is Pseudokinase OPG198 (OPG198), found in Cynomys gunnisoni (Gunnison's prairie dog).